Consider the following 235-residue polypeptide: Photosystem I assembly protein Ycf4 (235 aa).

Helical transmembrane passes span asparagine 21–tyrosine 43 and glycine 63–leucine 85.

This sequence belongs to the Ycf4 family.

It localises to the plastid. The protein localises to the chloroplast thylakoid membrane. Its function is as follows. Seems to be required for the assembly of the photosystem I complex. The chain is Photosystem I assembly protein Ycf4 from Amborella trichopoda.